Consider the following 490-residue polypeptide: Apocarotenoid-15,15'-oxygenase (490 aa).

Residue His-183 participates in Fe cation binding. Ser-206 is a binding site for substrate. His-238 provides a ligand contact to Fe cation. Phe-303 is a binding site for substrate. Residues His-304 and His-484 each coordinate Fe cation.

Belongs to the carotenoid oxygenase family. The cofactor is Fe(2+).

It catalyses the reaction all-trans-8'-apo-beta-carotenal + O2 = (2E,4E,6E)-2,6-dimethylocta-2,4,6-trienedial + all-trans-retinal. In terms of biological role, cleaves a number of carotenals and carotenols in the all-trans configuration at the 15-15' double bond producing retinal or retinol, respectively. Also shows activity toward lycopenals and the corresponding alcohols. Does not cleave beta-carotene or lycopene. In Synechocystis sp. (strain ATCC 27184 / PCC 6803 / Kazusa), this protein is Apocarotenoid-15,15'-oxygenase.